The sequence spans 351 residues: GDSL esterase/lipase At3g53100 (351 aa).

The signal sequence occupies residues 1 to 24 (MQKMRVSGFRVLLLVSCFFCKSKG). The Nucleophile role is filled by Ser36. N-linked (GlcNAc...) asparagine glycans are attached at residues Asn234, Asn254, and Asn318. Residues Asp326 and His329 contribute to the active site.

The protein belongs to the 'GDSL' lipolytic enzyme family.

The protein resides in the secreted. The protein is GDSL esterase/lipase At3g53100 of Arabidopsis thaliana (Mouse-ear cress).